Here is a 285-residue protein sequence, read N- to C-terminus: Neuralized-like protein 2 (285 aa).

The segment at 1–28 is disordered; the sequence is MADPSEHVGLGGPRSPARPEPPPTRFHQ. One can recognise an NHR domain in the interval 23–244; the sequence is PTRFHQVHGA…STKSVRLVQL (222 aa). One can recognise an SOCS box domain in the interval 250–285; the sequence is SLQTLCRLVIHKRVVHRLAIDVLHLPKGLKDFCKYE.

In terms of assembly, probable component the ECS(NEURL2) E3 ubiquitin-protein ligase complex consisting of ELOB/Elongin B, ELOC/Elongin C, CUL5, RBX1 and NEURL2. Interacts with CTNNB1. As to expression, expressed specifically in skeletal and cardiac muscles.

The protein localises to the cytoplasm. The protein operates within protein modification; protein ubiquitination. Functionally, plays an important role in the process of myofiber differentiation and maturation. Probable substrate-recognition component of a SCF-like ECS (Elongin BC-CUL2/5-SOCS-box protein) E3 ubiquitin-protein ligase complex, which mediates the ubiquitination of proteins. Probably contributes to catalysis through recognition and positioning of the substrate and the ubiquitin-conjugating enzyme. During myogenesis, controls the ubiquitination and degradation of the specific pool of CTNNB1/beta-catenin located at the sarcolemma. The sequence is that of Neuralized-like protein 2 (Neurl2) from Mus musculus (Mouse).